The primary structure comprises 253 residues: 5-oxoprolinase subunit A (253 aa).

It belongs to the LamB/PxpA family. As to quaternary structure, forms a complex composed of PxpA, PxpB and PxpC.

It carries out the reaction 5-oxo-L-proline + ATP + 2 H2O = L-glutamate + ADP + phosphate + H(+). Catalyzes the cleavage of 5-oxoproline to form L-glutamate coupled to the hydrolysis of ATP to ADP and inorganic phosphate. In Bacillus anthracis (strain A0248), this protein is 5-oxoprolinase subunit A.